A 292-amino-acid chain; its full sequence is uncharacterized protein (292 aa).

It is found in the virion. This is an uncharacterized protein from Acanthamoeba polyphaga (Amoeba).